The following is a 286-amino-acid chain: ATP synthase gamma chain (286 aa).

The protein belongs to the ATPase gamma chain family. F-type ATPases have 2 components, CF(1) - the catalytic core - and CF(0) - the membrane proton channel. CF(1) has five subunits: alpha(3), beta(3), gamma(1), delta(1), epsilon(1). CF(0) has three main subunits: a, b and c.

It is found in the cell inner membrane. Its function is as follows. Produces ATP from ADP in the presence of a proton gradient across the membrane. The gamma chain is believed to be important in regulating ATPase activity and the flow of protons through the CF(0) complex. The polypeptide is ATP synthase gamma chain (Leptospira borgpetersenii serovar Hardjo-bovis (strain JB197)).